The primary structure comprises 1409 residues: MAP kinase-activating death domain protein (1409 aa).

A uDENN domain is found at Arg-26 to Gln-230. In terms of domain architecture, cDENN spans Arg-251 to Lys-390. The region spanning Ala-392–Thr-496 is the dDENN domain. Disordered stretches follow at residues Ser-654–Leu-701, Gln-761–Asn-784, Ser-902–Thr-1008, and Pro-1015–Ala-1034. Polar residues-rich tracts occupy residues Ser-680–Ser-691 and Gln-761–Pro-772. Low complexity-rich tracts occupy residues Thr-773–Asn-784 and Ser-902–Ser-913. A compositionally biased stretch (basic and acidic residues) spans His-915–Pro-925. Residues Leu-941–Ser-961 are compositionally biased toward polar residues. The span at Ala-963–Arg-1003 shows a compositional bias: pro residues. The span at Pro-1020–Ser-1031 shows a compositional bias: low complexity. One can recognise a Death domain in the interval Gly-1109–Lys-1184.

It belongs to the MADD family. In terms of assembly, interacts with cab-1. As to expression, expressed in nearly all neurons.

The protein resides in the cell membrane. The protein localises to the cytoplasm. Functionally, guanyl-nucleotide exchange factor that regulates small GTPases. Converts GDP-bound inactive form of rab-3 and cab-1 to the GTP-bound active forms. Regulator of presynaptic activity that interacts with rab-3 to regulate synaptic vesicle release. Is also a regulator of the cab-1 synaptic transmission pathway. Probably by converting rab-3 to its GTP-bound active form, plays a role in the recruitment of endophilin unc-57 to synaptic vesicles. Probably by activating rab-3 and thus regulating the trafficking of dense-core vesicles, plays a role in AVG neuron-mediated formation of the right axon tract of the ventral nerve cord. Regulates anterior body muscle contractions (aBOC) and the expulsion steps during the defecation motor program (DMP). Probably by regulating DMP, required for fatty acid uptake by intestinal cells. This is MAP kinase-activating death domain protein (aex-3) from Caenorhabditis elegans.